A 439-amino-acid chain; its full sequence is Structure-specific endonuclease subunit SLX1 homolog (439 aa).

2 disordered regions span residues Met1–Lys28 and Asp117–Leu140. Over residues Glu125–Asn136 the composition is skewed to basic and acidic residues. Positions Glu166–Lys253 constitute a GIY-YIG domain. The SLX1-type zinc-finger motif lies at Cys335–Cys390.

Belongs to the SLX1 family. In terms of assembly, forms a heterodimer with him-18/slx-4. It depends on a divalent metal cation as a cofactor.

Its subcellular location is the nucleus. Functionally, catalytic subunit of a heterodimeric structure-specific endonuclease that resolves DNA secondary structures generated during DNA repair and recombination. Has endonuclease activity towards branched DNA substrates, introducing single-strand cuts in duplex DNA close to junctions with ss-DNA (Potential). Has a preference for replication forks over 5' flap structures or Holliday junctions and shows much lower activity toward 3' flap structures. Required for proper crossover distribution through inhibition of crossover formation at the central region of chromosomes. The chain is Structure-specific endonuclease subunit SLX1 homolog from Caenorhabditis briggsae.